The sequence spans 277 residues: Protein OPG166 (277 aa).

Asparagine 29 and asparagine 58 each carry an N-linked (GlcNAc...) asparagine; by host glycan. 5 helical membrane passes run 124 to 144 (TMLM…EIAY), 156 to 176 (GILQ…AFLF), 186 to 206 (IIGL…KVFS), 219 to 239 (LIIY…GLSL), and 247 to 267 (LLLS…LFLV).

The protein belongs to the orthopoxvirus OPG166 protein family.

It is found in the host membrane. In terms of biological role, promotes, when overexpressed, the influx of extracellular Ca(2+), leading to membrane permeability and host cell necrosis. The chain is Protein OPG166 (OPG166) from Cynomys gunnisoni (Gunnison's prairie dog).